An 89-amino-acid polypeptide reads, in one-letter code: Small ribosomal subunit protein uS14A (89 aa).

The protein belongs to the universal ribosomal protein uS14 family. Part of the 30S ribosomal subunit. Contacts proteins S3 and S10.

Binds 16S rRNA, required for the assembly of 30S particles and may also be responsible for determining the conformation of the 16S rRNA at the A site. The protein is Small ribosomal subunit protein uS14A of Staphylococcus epidermidis (strain ATCC 35984 / DSM 28319 / BCRC 17069 / CCUG 31568 / BM 3577 / RP62A).